The sequence spans 73 residues: Putative defensin-like protein 277 (73 aa).

An N-terminal signal peptide occupies residues 1 to 24 (MSAQKIYLASLLLFICLVFPQSTA). 4 disulfides stabilise this stretch: Cys-27/Cys-64, Cys-33/Cys-52, Cys-39/Cys-62, and Cys-43/Cys-63.

The protein belongs to the DEFL family.

The protein localises to the secreted. This Arabidopsis thaliana (Mouse-ear cress) protein is Putative defensin-like protein 277.